A 289-amino-acid chain; its full sequence is Complement C1q tumor necrosis factor-related protein 7 (289 aa).

The N-terminal stretch at 1–16 is a signal peptide; it reads MIVLLYVTSLAICASG. Residues 36–134 form a disordered region; that stretch reads IPGLPGPPGP…GDRGDQGDPG (99 aa). Positions 38–139 constitute a Collagen-like domain; it reads GLPGPPGPPG…QGDPGLPGVC (102 aa). Residues 48–61 are compositionally biased toward low complexity; the sequence is ANGSPGPHGRIGLP. Basic and acidic residues predominate over residues 63 to 76; sequence RDGRDGRKGEKGEK. The segment covering 78-91 has biased composition (low complexity); it reads TAGLKGKTGPLGLA. Residues 93 to 102 are compositionally biased toward basic and acidic residues; sequence EKGDQGETGK. Residues 143–279 enclose the C1q domain; it reads SIVLKSAFSV…GFLLYVDTDY (137 aa).

It localises to the secreted. The sequence is that of Complement C1q tumor necrosis factor-related protein 7 (C1qtnf7) from Mus musculus (Mouse).